Here is a 734-residue protein sequence, read N- to C-terminus: Probable inactive histone-lysine N-methyltransferase SUVR1 (734 aa).

The tract at residues 61 to 163 (QSTEKNKKEE…LPPLKRYVRR (103 aa)) is disordered. The segment covering 62 to 81 (STEKNKKEEEKKKKEEEKKS) has biased composition (basic and acidic residues). Residues 98 to 109 (VQDEEDDMDEDE) are compositionally biased toward acidic residues. The segment covering 113 to 122 (KRRLRSRRGR) has biased composition (basic residues). The segment covering 123-132 (ASSSSSSSSS) has biased composition (low complexity). Cys-460, Cys-464, Cys-468, Cys-477, Cys-545, Cys-549, Cys-551, and Cys-555 together coordinate Zn(2+). The Pre-SET domain occupies 460-563 (CSTSCIEDCL…RCGNRVVQRG (104 aa)). Residues 566 to 696 (NKLQVFFTPN…AMEELAWDYG (131 aa)) enclose the SET domain. Residues 577–579 (KGW) and 652–653 (NH) each bind S-adenosyl-L-methionine. Cys-655 is a Zn(2+) binding site. Residue Tyr-695 participates in S-adenosyl-L-methionine binding. Residues 707-723 (KPFDCLCGSRFCRNKKR) form the Post-SET domain. Positions 711, 713, and 718 each coordinate Zn(2+).

It belongs to the class V-like SAM-binding methyltransferase superfamily. Histone-lysine methyltransferase family. Interacts with SUVR2 and itself.

It is found in the nucleus. It localises to the chromosome. Probable inactive histone-lysine methyltransferase that acts as regulator of transctiptional gene silencing independently of histone H3K9 methylation. Contributes to transcriptional gene silencing at RNA-directed DNA methylation (RdDM) target loci but also at RdDM-independent target loci. In Arabidopsis thaliana (Mouse-ear cress), this protein is Probable inactive histone-lysine N-methyltransferase SUVR1 (SUVR1).